Consider the following 418-residue polypeptide: L-rhamnose isomerase (418 aa).

Positions 262, 294, and 296 each coordinate Mn(2+).

The protein belongs to the rhamnose isomerase family. As to quaternary structure, homotetramer. Mn(2+) serves as cofactor.

Its subcellular location is the cytoplasm. It carries out the reaction L-rhamnopyranose = L-rhamnulose. The protein operates within carbohydrate degradation; L-rhamnose degradation; glycerone phosphate from L-rhamnose: step 1/3. In terms of biological role, catalyzes the interconversion of L-rhamnose and L-rhamnulose. This is L-rhamnose isomerase from Yersinia pseudotuberculosis serotype IB (strain PB1/+).